The primary structure comprises 90 residues: Large ribosomal subunit protein bL27 (90 aa).

Residues 1–22 are disordered; that stretch reads MAHKKSGGSSSNGRDSAGRRLG.

Belongs to the bacterial ribosomal protein bL27 family.

The chain is Large ribosomal subunit protein bL27 from Caulobacter sp. (strain K31).